The primary structure comprises 491 residues: ATP-dependent protease ATPase subunit HslU (491 aa).

ATP-binding positions include isoleucine 34, glycine 76–glutamate 81, aspartate 296, glutamate 364, and arginine 436.

This sequence belongs to the ClpX chaperone family. HslU subfamily. A double ring-shaped homohexamer of HslV is capped on each side by a ring-shaped HslU homohexamer. The assembly of the HslU/HslV complex is dependent on binding of ATP.

It localises to the cytoplasm. Functionally, ATPase subunit of a proteasome-like degradation complex; this subunit has chaperone activity. The binding of ATP and its subsequent hydrolysis by HslU are essential for unfolding of protein substrates subsequently hydrolyzed by HslV. HslU recognizes the N-terminal part of its protein substrates and unfolds these before they are guided to HslV for hydrolysis. In Chlorobaculum tepidum (strain ATCC 49652 / DSM 12025 / NBRC 103806 / TLS) (Chlorobium tepidum), this protein is ATP-dependent protease ATPase subunit HslU.